The sequence spans 471 residues: ATP synthase subunit beta 2 (471 aa).

Residue glycine 157–threonine 164 participates in ATP binding.

It belongs to the ATPase alpha/beta chains family. In terms of assembly, F-type ATPases have 2 components, CF(1) - the catalytic core - and CF(0) - the membrane proton channel. CF(1) has five subunits: alpha(3), beta(3), gamma(1), delta(1), epsilon(1). CF(0) has three main subunits: a(1), b(2) and c(9-12). The alpha and beta chains form an alternating ring which encloses part of the gamma chain. CF(1) is attached to CF(0) by a central stalk formed by the gamma and epsilon chains, while a peripheral stalk is formed by the delta and b chains.

The protein localises to the cell inner membrane. It carries out the reaction ATP + H2O + 4 H(+)(in) = ADP + phosphate + 5 H(+)(out). In terms of biological role, produces ATP from ADP in the presence of a proton gradient across the membrane. The catalytic sites are hosted primarily by the beta subunits. The sequence is that of ATP synthase subunit beta 2 from Pelobacter propionicus (strain DSM 2379 / NBRC 103807 / OttBd1).